We begin with the raw amino-acid sequence, 217 residues long: Probable transaldolase (217 aa).

The Schiff-base intermediate with substrate role is filled by lysine 83.

This sequence belongs to the transaldolase family. Type 3B subfamily.

The protein resides in the cytoplasm. The enzyme catalyses D-sedoheptulose 7-phosphate + D-glyceraldehyde 3-phosphate = D-erythrose 4-phosphate + beta-D-fructose 6-phosphate. The protein operates within carbohydrate degradation; pentose phosphate pathway; D-glyceraldehyde 3-phosphate and beta-D-fructose 6-phosphate from D-ribose 5-phosphate and D-xylulose 5-phosphate (non-oxidative stage): step 2/3. Transaldolase is important for the balance of metabolites in the pentose-phosphate pathway. This chain is Probable transaldolase, found in Ruegeria sp. (strain TM1040) (Silicibacter sp.).